The primary structure comprises 1146 residues: Myosin heavy chain kinase A (1146 aa).

The disordered stretch occupies residues 1–25 (MFNIKKRKESITGIPPINVNSPQSV). The stretch at 100–120 (EQMEDQLEKTMKVVRNHTDSL) forms a coiled coil. The segment at 158–191 (IQEKKSTSSPLVKGGISGGGGSGGDDSFDGANIS) is disordered. A compositionally biased stretch (gly residues) spans 172–181 (GISGGGGSGG). Coiled-coil stretches lie at residues 187 to 241 (GANI…KRIE) and 297 to 502 (SKIE…ASIS). A pseudosubstrate/autoinhibitory domain region spans residues 500–551 (SISPISSVPKSPITTKRSSIILNSPPMTSQQSSPKIQDLLSSSGSSSVSGIN). Polar residues predominate over residues 521-534 (LNSPPMTSQQSSPK). The disordered stretch occupies residues 521 to 540 (LNSPPMTSQQSSPKIQDLLS). Residues 552–852 (ISSETGEMGI…KVGAKQLPKA (301 aa)) form a catalytic region. Residues 564–808 (EFDPIINKWI…VCALLDLDVK (245 aa)) enclose the Alpha-type protein kinase domain. 778–783 (GLGNLG) serves as a coordination point for ATP. 7 WD repeats span residues 867 to 897 (SFRERVNSIAFFDNQKLLCAGYGDGTYRVFD), 910 to 938 (GHRKSIESIACNSNYIFTSSPDNTIKVHI), 952 to 980 (GHTGEVNCVVANEKYLFSCSYDKTIKVWD), 993 to 1021 (VHTKYIKTLALSGRYLFSGGNDQIIYVWD), 1033 to 1061 (GHEDWVLSLHCTASYLFSTSKDNVIKIWD), 1073 to 1101 (GHWNSVSSCVVKDRYLYSGSEDNSIKVWD), and 1114 to 1142 (SHSLGVKCLMVFNNQIISAAFDGSIKVWE).

The protein belongs to the protein kinase superfamily. Alpha-type protein kinase family. ALPK subfamily. As to quaternary structure, oligomer. The cofactor is Mg(2+). Mn(2+) serves as cofactor. The N-terminus is blocked.

It catalyses the reaction L-threonyl-[myosin heavy-chain] + ATP = O-phospho-L-threonyl-[myosin heavy-chain] + ADP + H(+). Functionally, catalyzes its autophosphorylation, which is needed for enzymatic activity and phosphorylates myosin II heavy chain at a threonine in the C-terminal tail region. This phosphorylation is critical for regulating the assembly and disassembly of myosin II filament, affecting myosin localization during an array of cellular contractile events, including cytokinesis and capping of cell surface receptors as well as chemotactic cell locomotion. The protein is Myosin heavy chain kinase A (mhkA) of Dictyostelium discoideum (Social amoeba).